Reading from the N-terminus, the 55-residue chain is U2-theraphotoxin-Cg1a (55 aa).

Positions 1-19 are excised as a propeptide; it reads DSPAWLKSMERIFQSEERE. Cystine bridges form between C20–C34, C27–C39, and C33–C47.

The protein belongs to the neurotoxin 10 (Hwtx-1) family. 06 (F4b) subfamily. In terms of tissue distribution, expressed by the venom gland.

It is found in the secreted. Its function is as follows. Probable ion channel inhibitor. The sequence is that of U2-theraphotoxin-Cg1a from Chilobrachys guangxiensis (Chinese earth tiger tarantula).